Reading from the N-terminus, the 171-residue chain is Adenine phosphoribosyltransferase (171 aa).

The protein belongs to the purine/pyrimidine phosphoribosyltransferase family. As to quaternary structure, homodimer.

It is found in the cytoplasm. The enzyme catalyses AMP + diphosphate = 5-phospho-alpha-D-ribose 1-diphosphate + adenine. It participates in purine metabolism; AMP biosynthesis via salvage pathway; AMP from adenine: step 1/1. Functionally, catalyzes a salvage reaction resulting in the formation of AMP, that is energically less costly than de novo synthesis. This is Adenine phosphoribosyltransferase from Rhodospirillum centenum (strain ATCC 51521 / SW).